The sequence spans 313 residues: Pyrimidine-specific ribonucleoside hydrolase RihB (313 aa).

Asp-11 (proton acceptor) is an active-site residue. Ca(2+)-binding residues include Asp-11, Asp-16, and Val-124. Positions 227 and 239 each coordinate substrate. Asp-240 serves as a coordination point for Ca(2+).

It belongs to the IUNH family. RihB subfamily. Homotetramer. It depends on Ca(2+) as a cofactor.

The catalysed reaction is a pyrimidine ribonucleoside + H2O = a pyrimidine nucleobase + D-ribose. Its function is as follows. Hydrolyzes cytidine or uridine to ribose and cytosine or uracil, respectively. Has a clear preference for cytidine over uridine. Strictly specific for ribonucleosides. The polypeptide is Pyrimidine-specific ribonucleoside hydrolase RihB (Shigella sonnei (strain Ss046)).